A 245-amino-acid chain; its full sequence is Heat shock transcription factor (245 aa).

Residues K17–S115 mediate DNA binding. The tract at residues S130 to A169 is involved in trimerization.

It belongs to the HSF family. Homotrimer. Homotrimerization increases the affinity of HSF1 to DNA.

Its subcellular location is the nucleus. Functionally, DNA-binding transcription factor that specifically binds heat shock promoter elements (HSE) and activates transcription. The chain is Heat shock transcription factor from Enterocytozoon bieneusi (strain H348) (Microsporidian parasite).